The sequence spans 383 residues: Microtubule-associated protein tau (383 aa).

A compositionally biased stretch (basic and acidic residues) spans 1-27 (MAEPRQEFDVMEDHAGTYGLGDRKDQE). Positions 1 to 198 (MAEPRQEFDV…PVPMPDLKNV (198 aa)) are disordered. At A2 the chain carries N-acetylalanine. Phosphotyrosine occurs at positions 18 and 29. Residue K44 forms a Glycyl lysine isopeptide (Lys-Gly) (interchain with G-Cter in ubiquitin) linkage. Residue T53 is modified to Phosphothreonine. The span at 72 to 91 (KSKDGTGSDDKKAKGADGKT) shows a compositional bias: basic and acidic residues. A Phosphothreonine modification is found at T95. R97 carries the omega-N-methylarginine modification. Residue K105 is modified to N6,N6-dimethyllysine; alternate. Position 105 is an N6-acetyllysine; alternate (K105). Phosphothreonine occurs at positions 111, 117, and 123. Residues 116–128 (KTPPAPKTPPSSG) show a composition bias toward pro residues. Phosphoserine occurs at positions 127, 133, and 137. The span at 129-156 (EPPKSGDRSGYSSPGSPGTPGSRSRTPS) shows a compositional bias: low complexity. Y139 carries the phosphotyrosine modification. Phosphoserine is present on residues S140, S141, and S144. T147 and T154 each carry phosphothreonine. Position 156 is a phosphoserine (S156). A Phosphothreonine modification is found at T159. At K167 the chain carries N6-acetyllysine. T173 is subject to Phosphothreonine. Residues S177 and S179 each carry the phosphoserine modification. Tau/MAP repeat units lie at residues 186–216 (QTAPVPMPDLKNVKSKIGSTENLKHQPGGGK), 217–247 (VQIINKKLDLSNVQSKCGSKDNIKHVPGGGS), 248–278 (VQIVYKPVDLSKVTSKCGSLGNIHHKPGGGQ), and 279–310 (VEVKSEKLDFKDRVQSKIGSLDNITHVPGGGN). A Glycyl lysine isopeptide (Lys-Gly) (interchain with G-Cter in ubiquitin) cross-link involves residue K196. K201 carries the post-translational modification N6-acetyllysine; alternate. K201 bears the N6-methyllysine; alternate mark. A Glycyl lysine isopeptide (Lys-Gly) (interchain with G-Cter in ubiquitin); alternate cross-link involves residue K201. S204 is subject to Phosphoserine. K209 participates in a covalent cross-link: Glycyl lysine isopeptide (Lys-Gly) (interchain with G-Cter in ubiquitin). K223 is modified (N6-acetyllysine; alternate). K223 participates in a covalent cross-link: Glycyl lysine isopeptide (Lys-Gly) (interchain with G-Cter in ubiquitin); alternate. Phosphoserine is present on residues S227 and S231. An N6-acetyllysine modification is found at K232. A disulfide bridge links C233 with C264. Residue S235 is modified to Phosphoserine. Residue K240 is modified to N6-acetyllysine; alternate. Residue K240 forms a Glycyl lysine isopeptide (Lys-Gly) (interchain with G-Cter in ubiquitin); alternate linkage. Position 247 is a phosphoserine (S247). The residue at position 253 (K253) is an N6,N6-dimethyllysine; alternate. An N6-acetyllysine; alternate mark is found at K253, K259, and K263. Residues K253, K259, and K263 each participate in a glycyl lysine isopeptide (Lys-Gly) (interchain with G-Cter in ubiquitin); alternate cross-link. S266 carries the post-translational modification Phosphoserine. An N6-acetyllysine; alternate mark is found at K273, K285, and K289. Residues K273, K285, and K289 each participate in a glycyl lysine isopeptide (Lys-Gly) (interchain with G-Cter in ubiquitin); alternate cross-link. R291 is modified (omega-N-methylarginine). S294 bears the Phosphoserine mark. A Glycyl lysine isopeptide (Lys-Gly) (interchain with G-Cter in ubiquitin) cross-link involves residue K295. S298 carries the phosphoserine modification. K311 carries the post-translational modification N6-acetyllysine; alternate. K311 participates in a covalent cross-link: Glycyl lysine isopeptide (Lys-Gly) (interchain with G-Cter in ubiquitin); alternate. K317 participates in a covalent cross-link: Glycyl lysine isopeptide (Lys-Gly) (interchain with G-Cter in ubiquitin). An N6-acetyllysine; alternate modification is found at K327. Residue K327 forms a Glycyl lysine isopeptide (Lys-Gly) (interchain with G-Cter in ubiquitin); alternate linkage. At Y336 the chain carries Phosphotyrosine. 2 positions are modified to phosphoserine: S338 and S342. Residues 340-359 (VVSGDTSPRHLSNVSSTGSI) are disordered. The span at 343–358 (GDTSPRHLSNVSSTGS) shows a compositional bias: polar residues. Position 345 is a phosphothreonine (T345). Phosphoserine is present on residues S346, S351, S358, and S364. T369 is subject to Phosphothreonine.

As to quaternary structure, interacts with MARK1, MARK2, MARK3 and MARK4. Interacts with SQSTM1 when polyubiquitinated. Interacts with PSMC2 through SQSTM1. Interacts with FKBP4. Binds to CSNK1D. Interacts with SGK1. Interacts with PIN1. Interacts with LRRK2. Interacts with LRP1, leading to endocytosis; this interaction is reduced in the presence of LRPAP1/RAP. In terms of processing, polyubiquitinated. Requires functional TRAF6 and may provoke SQSTM1-dependent degradation by the proteasome. Post-translationally, phosphorylation at various serine and threonine residues in S-P or T-P motifs by proline-directed protein kinases (PDPK1, CDK1, CDK5, GSK3, MAPK) (a few sites per protein in interphase, more in mitosis), and at serine residues in K-X-G-S motifs by MAP/microtubule affinity-regulating kinase (MARK1, MARK2, MARK3 or MARK4), causing detachment from microtubules, and their disassembly. Phosphorylation at Ser-204 by BRSK1 and BRSK2 in neurons affects ability to bind microtubules and plays a role in neuron polarization. Phosphorylated by PHK. Dephosphorylation at several serine and threonine residues by the serine/threonine phosphatase PPP5C. As to expression, expressed in neurons.

It localises to the cytoplasm. It is found in the cytosol. Its subcellular location is the cell membrane. The protein localises to the cytoskeleton. The protein resides in the cell projection. It localises to the axon. It is found in the dendrite. Promotes microtubule assembly and stability, and might be involved in the establishment and maintenance of neuronal polarity. The C-terminus binds axonal microtubules while the N-terminus binds neural plasma membrane components, suggesting that tau functions as a linker protein between both. Axonal polarity is predetermined by tau localization (in the neuronal cell) in the domain of the cell body defined by the centrosome. In Papio hamadryas (Hamadryas baboon), this protein is Microtubule-associated protein tau (MAPT).